Consider the following 988-residue polypeptide: Squamosa promoter-binding-like protein 16 (988 aa).

The disordered stretch occupies residues 52–79 (GTPVDLTRPSKKVRSGSPGSGGGGGGNY). A compositionally biased stretch (gly residues) spans 69-78 (PGSGGGGGGN). Residues 79–156 (YPKCQVDNCK…DGHNRRRRKT (78 aa)) form an SBP-type zinc finger. Cys-82, Cys-87, Cys-104, His-107, Cys-123, Cys-126, His-130, and Cys-142 together coordinate Zn(2+). A Bipartite nuclear localization signal motif is present at residues 139-155 (KRSCRRRLDGHNRRRRK). 2 disordered regions span residues 240–262 (RKNP…SSPS) and 289–416 (GFGN…DTST). Composition is skewed to polar residues over residues 250–262 (NPQN…SSPS), 301–311 (LTSSDHSATTS), and 327–358 (RTSS…FTSS). The span at 368-379 (ASSTKYYSSASS) shows a compositional bias: low complexity.

Zn(2+) serves as cofactor.

Its subcellular location is the nucleus. Trans-acting factor that binds specifically to the consensus nucleotide sequence 5'-TNCGTACAA-3'. This chain is Squamosa promoter-binding-like protein 16 (SPL16), found in Arabidopsis thaliana (Mouse-ear cress).